Here is a 407-residue protein sequence, read N- to C-terminus: Succinyl-diaminopimelate desuccinylase (407 aa).

A compositionally biased stretch (polar residues) spans Met-1–Ser-10. Residues Met-1–Gln-20 form a disordered region. The span at Gln-11 to Gln-20 shows a compositional bias: low complexity. A Zn(2+)-binding site is contributed by His-93. Residue Asp-95 is part of the active site. Asp-126 is a binding site for Zn(2+). The active-site Proton acceptor is the Glu-160. 3 residues coordinate Zn(2+): Glu-161, Glu-189, and His-379.

It belongs to the peptidase M20A family. DapE subfamily. As to quaternary structure, homodimer. It depends on Zn(2+) as a cofactor. Co(2+) serves as cofactor.

The enzyme catalyses N-succinyl-(2S,6S)-2,6-diaminopimelate + H2O = (2S,6S)-2,6-diaminopimelate + succinate. The protein operates within amino-acid biosynthesis; L-lysine biosynthesis via DAP pathway; LL-2,6-diaminopimelate from (S)-tetrahydrodipicolinate (succinylase route): step 3/3. Its function is as follows. Catalyzes the hydrolysis of N-succinyl-L,L-diaminopimelic acid (SDAP), forming succinate and LL-2,6-diaminopimelate (DAP), an intermediate involved in the bacterial biosynthesis of lysine and meso-diaminopimelic acid, an essential component of bacterial cell walls. This chain is Succinyl-diaminopimelate desuccinylase, found in Psychrobacter arcticus (strain DSM 17307 / VKM B-2377 / 273-4).